A 196-amino-acid chain; its full sequence is Small ribosomal subunit protein uS4c (196 aa).

The S4 RNA-binding domain occupies 89 to 149; sequence MRLDNILFRL…DKQRSKALIQ (61 aa).

The protein belongs to the universal ribosomal protein uS4 family. Part of the 30S ribosomal subunit. Contacts protein S5. The interaction surface between S4 and S5 is involved in control of translational fidelity.

The protein localises to the plastid. Its subcellular location is the chloroplast. In terms of biological role, one of the primary rRNA binding proteins, it binds directly to 16S rRNA where it nucleates assembly of the body of the 30S subunit. With S5 and S12 plays an important role in translational accuracy. This is Small ribosomal subunit protein uS4c (rps4) from Asparagus maritimus (Sea asparagus).